Reading from the N-terminus, the 528-residue chain is DEAD-box ATP-dependent RNA helicase CshA (528 aa).

Positions 2 to 30 (TTFRELGLSDSLLQSVESMGFEEATPIQA) match the Q motif motif. The Helicase ATP-binding domain occupies 33–203 (IPHALQGKDI…ERFMTEPQHI (171 aa)). 46-53 (AQTGTGKT) provides a ligand contact to ATP. Residues 151–154 (DEAD) carry the DEAD box motif. One can recognise a Helicase C-terminal domain in the interval 214–374 (NIQQFYLEVQ…RMDAPTLDEA (161 aa)). Residues 428 to 528 (TTPIALTSEP…RKHHSRKPQA (101 aa)) form a disordered region. Positions 458 to 506 (DGNRNRSRDGRGGDGRNRDRNRDGRNRDGNRDRNREGSRDGNRGRRGEG) are enriched in basic and acidic residues. Basic residues predominate over residues 518–528 (ERKHHSRKPQA).

This sequence belongs to the DEAD box helicase family. CshA subfamily. As to quaternary structure, oligomerizes, may be a member of the RNA degradosome.

The protein resides in the cytoplasm. It carries out the reaction ATP + H2O = ADP + phosphate + H(+). In terms of biological role, DEAD-box RNA helicase possibly involved in RNA degradation. Unwinds dsRNA in both 5'- and 3'-directions, has RNA-dependent ATPase activity. The sequence is that of DEAD-box ATP-dependent RNA helicase CshA from Bacillus thuringiensis (strain Al Hakam).